The chain runs to 356 residues: Uroporphyrinogen decarboxylase (356 aa).

Substrate is bound by residues 27–31 (RQAGR), aspartate 77, tyrosine 154, threonine 209, and histidine 327.

It belongs to the uroporphyrinogen decarboxylase family. In terms of assembly, homodimer.

Its subcellular location is the cytoplasm. The enzyme catalyses uroporphyrinogen III + 4 H(+) = coproporphyrinogen III + 4 CO2. The protein operates within porphyrin-containing compound metabolism; protoporphyrin-IX biosynthesis; coproporphyrinogen-III from 5-aminolevulinate: step 4/4. Catalyzes the decarboxylation of four acetate groups of uroporphyrinogen-III to yield coproporphyrinogen-III. In Cellvibrio japonicus (strain Ueda107) (Pseudomonas fluorescens subsp. cellulosa), this protein is Uroporphyrinogen decarboxylase.